Reading from the N-terminus, the 594-residue chain is Cryptochrome-2 (594 aa).

In terms of domain architecture, Photolyase/cryptochrome alpha/beta spans 21 to 150 (ASSVHWFRKG…EVVTENSHTL (130 aa)). Residue lysine 29 forms a Glycyl lysine isopeptide (Lys-Gly) (interchain with G-Cter in ubiquitin) linkage. Serine 89 is subject to Phosphoserine. Residues lysine 125 and lysine 241 each participate in a glycyl lysine isopeptide (Lys-Gly) (interchain with G-Cter in ubiquitin) cross-link. The residue at position 265 (serine 265) is a Phosphoserine; by MAPK. Serine 270 lines the FAD pocket. At serine 298 the chain carries Phosphoserine. Residue glutamine 307 participates in FAD binding. Residue lysine 347 forms a Glycyl lysine isopeptide (Lys-Gly) (interchain with G-Cter in ubiquitin) linkage. Residues histidine 373 and 405 to 407 (DAD) contribute to the FAD site. Positions 389–488 (WVSWESGVRV…IIGVDYPRPI (100 aa)) are required for inhibition of CLOCK-BMAL1-mediated transcription. Glycyl lysine isopeptide (Lys-Gly) (interchain with G-Cter in ubiquitin) cross-links involve residues lysine 474 and lysine 503. The disordered stretch occupies residues 532–594 (VAEPGSSQAG…PAQEPPSKDS (63 aa)). Positions 536-547 (GSSQAGSISNTG) are enriched in polar residues. Serine 553 carries the post-translational modification Phosphoserine; by GSK3-beta. Residue serine 557 is modified to Phosphoserine; by DYRK1A and MAPK.

Belongs to the DNA photolyase class-1 family. In terms of assembly, component of the circadian core oscillator, which includes the CRY proteins, CLOCK or NPAS2, BMAL1 or BMAL2, CSNK1D and/or CSNK1E, TIMELESS, and the PER proteins. Interacts with TIMELESS. Interacts directly with PER1, PER2 and PER3; interaction with PER2 inhibits its ubiquitination and vice versa. Interacts with CLOCK-BMAL1. Interacts with CLOCK. Interacts with BMAL1. Interacts with NFIL3. Interacts with FBXL3 and FBXL21. FBXL3, PER2 and the cofactor FAD compete for overlapping binding sites. FBXL3 cannot bind CRY2 that interacts already with PER2 or that contains bound FAD. Interacts with PPP5C (via TPR repeats); the interaction down-regulates the PPP5C phosphatase activity on CSNK1E. Interacts with nuclear receptors AR and NR3C1/GR; the interaction is ligand dependent. Interacts with PRKDC and CIART. Interacts with DDB1, USP7 and TARDBP. Interacts with HNF4A and PPARA. Interacts with PPARD (via domain NR LBD) and NR1I2 (via domain NR LBD) in a ligand-dependent manner. Interacts with PPARG, NR1I3 and VDR in a ligand-dependent manner. FAD is required as a cofactor. (6R)-5,10-methylene-5,6,7,8-tetrahydrofolate serves as cofactor. In terms of processing, phosphorylation on Ser-265 by MAPK is important for the inhibition of CLOCK-BMAL1-mediated transcriptional activity. Phosphorylation by CSKNe requires interaction with PER1 or PER2. Phosphorylated in a circadian manner at Ser-553 and Ser-557 in the suprachiasmatic nucleus (SCN) and liver. Phosphorylation at Ser-557 by DYRK1A promotes subsequent phosphorylation at Ser-553 by GSK3-beta: the two-step phosphorylation at the neighboring Ser residues leads to its proteasomal degradation. Post-translationally, ubiquitinated by the SCF(FBXL3) and SCF(FBXL21) complexes, regulating the balance between degradation and stabilization. The SCF(FBXL3) complex is mainly nuclear and mediates ubiquitination and subsequent degradation of CRY2. In contrast, cytoplasmic SCF(FBXL21) complex-mediated ubiquitination leads to stabilize CRY2 and counteract the activity of the SCF(FBXL3) complex. The SCF(FBXL3) and SCF(FBXL21) complexes probably mediate ubiquitination at different Lys residues. The SCF(FBXL3) complex recognizes and binds CRY2 phosphorylated at Ser-553 and Ser-557. Ubiquitination may be inhibited by PER2. Deubiquitinated by USP7. Expressed in all tissues examined including heart, cerebellum, cerebral cortex, lung, liver, muscle, kidney and ovary. Highest levels in heart, liver and ovary. Highly expressed in the suprachiasmatic nucleus (SCN).

Its subcellular location is the cytoplasm. It is found in the nucleus. In terms of biological role, transcriptional repressor which forms a core component of the circadian clock. The circadian clock, an internal time-keeping system, regulates various physiological processes through the generation of approximately 24 hour circadian rhythms in gene expression, which are translated into rhythms in metabolism and behavior. It is derived from the Latin roots 'circa' (about) and 'diem' (day) and acts as an important regulator of a wide array of physiological functions including metabolism, sleep, body temperature, blood pressure, endocrine, immune, cardiovascular, and renal function. Consists of two major components: the central clock, residing in the suprachiasmatic nucleus (SCN) of the brain, and the peripheral clocks that are present in nearly every tissue and organ system. Both the central and peripheral clocks can be reset by environmental cues, also known as Zeitgebers (German for 'timegivers'). The predominant Zeitgeber for the central clock is light, which is sensed by retina and signals directly to the SCN. The central clock entrains the peripheral clocks through neuronal and hormonal signals, body temperature and feeding-related cues, aligning all clocks with the external light/dark cycle. Circadian rhythms allow an organism to achieve temporal homeostasis with its environment at the molecular level by regulating gene expression to create a peak of protein expression once every 24 hours to control when a particular physiological process is most active with respect to the solar day. Transcription and translation of core clock components (CLOCK, NPAS2, BMAL1, BMAL2, PER1, PER2, PER3, CRY1 and CRY2) plays a critical role in rhythm generation, whereas delays imposed by post-translational modifications (PTMs) are important for determining the period (tau) of the rhythms (tau refers to the period of a rhythm and is the length, in time, of one complete cycle). A diurnal rhythm is synchronized with the day/night cycle, while the ultradian and infradian rhythms have a period shorter and longer than 24 hours, respectively. Disruptions in the circadian rhythms contribute to the pathology of cardiovascular diseases, cancer, metabolic syndromes and aging. A transcription/translation feedback loop (TTFL) forms the core of the molecular circadian clock mechanism. Transcription factors, CLOCK or NPAS2 and BMAL1 or BMAL2, form the positive limb of the feedback loop, act in the form of a heterodimer and activate the transcription of core clock genes and clock-controlled genes (involved in key metabolic processes), harboring E-box elements (5'-CACGTG-3') within their promoters. The core clock genes: PER1/2/3 and CRY1/2 which are transcriptional repressors form the negative limb of the feedback loop and interact with the CLOCK|NPAS2-BMAL1|BMAL2 heterodimer inhibiting its activity and thereby negatively regulating their own expression. This heterodimer also activates nuclear receptors NR1D1/2 and RORA/B/G, which form a second feedback loop and which activate and repress BMAL1 transcription, respectively. CRY1 and CRY2 have redundant functions but also differential and selective contributions at least in defining the pace of the SCN circadian clock and its circadian transcriptional outputs. Less potent transcriptional repressor in cerebellum and liver than CRY1, though less effective in lengthening the period of the SCN oscillator. Seems to play a critical role in tuning SCN circadian period by opposing the action of CRY1. With CRY1, dispensable for circadian rhythm generation but necessary for the development of intercellular networks for rhythm synchrony. May mediate circadian regulation of cAMP signaling and gluconeogenesis by blocking glucagon-mediated increases in intracellular cAMP concentrations and in CREB1 phosphorylation. Besides its role in the maintenance of the circadian clock, is also involved in the regulation of other processes. Plays a key role in glucose and lipid metabolism modulation, in part, through the transcriptional regulation of genes involved in these pathways, such as LEP or ACSL4. Represses glucocorticoid receptor NR3C1/GR-induced transcriptional activity by binding to glucocorticoid response elements (GREs). Represses the CLOCK-BMAL1 induced transcription of BHLHE40/DEC1 and NAMPT. Represses PPARD and its target genes in the skeletal muscle and limits exercise capacity. Represses the transcriptional activity of NR1I2. The protein is Cryptochrome-2 (Cry2) of Rattus norvegicus (Rat).